The following is a 276-amino-acid chain: Golgi apparatus membrane protein TVP23 homolog C (276 aa).

Met1 bears the N-acetylmethionine mark. Residues 1–21 form a disordered region; it reads MLQQDSNDDTEDVSLFDAEEE. The next 2 helical transmembrane spans lie at 52–72 and 126–146; these read LLCE…ILLL and IFWL…FSAL. Residues 254-276 form a disordered region; that stretch reads GESPNSRGTGEPGPKFHLASGMH.

This sequence belongs to the TVP23 family.

Its subcellular location is the membrane. This is Golgi apparatus membrane protein TVP23 homolog C (TVP23C) from Homo sapiens (Human).